We begin with the raw amino-acid sequence, 182 residues long: Oligoribonuclease (182 aa).

Positions 8-171 (LIWIDLEMTG…DDIRESIKEL (164 aa)) constitute an Exonuclease domain. Y129 is an active-site residue.

Belongs to the oligoribonuclease family.

The protein resides in the cytoplasm. Its function is as follows. 3'-to-5' exoribonuclease specific for small oligoribonucleotides. This Haemophilus influenzae (strain 86-028NP) protein is Oligoribonuclease.